We begin with the raw amino-acid sequence, 84 residues long: UPF0473 protein CLD_2004 (84 aa).

It belongs to the UPF0473 family.

In Clostridium botulinum (strain Okra / Type B1), this protein is UPF0473 protein CLD_2004.